The primary structure comprises 269 residues: MTNNLDKLKIGNKSFNSRLMLGTGKYRTTQSAIASIEDSNCDIVTVAIRRLPVNLKNDNINFLNKLDWNKLWLLPNTAGSQTAEEAIRMAFLGHELACQVGQEDNFFVKLEVISDPKYLLPDPIGTLKAAEFLIRKGFTVLPYINADPMLALHLEDLGCATVMPLASPIGSGQGLNNLANIKIIIENASVPVIIDAGIGTPSEATQAMELGADGVLLNTAVAQSKNPSQMASAMRLGVQAGRLAYLAGRMEKKYYADASSPLEQISKLI.

K109 functions as the Schiff-base intermediate with DXP in the catalytic mechanism. Residues G170, 196 to 197 (AG), and 218 to 219 (NT) contribute to the 1-deoxy-D-xylulose 5-phosphate site.

This sequence belongs to the ThiG family. In terms of assembly, homotetramer. Forms heterodimers with either ThiH or ThiS.

The protein resides in the plastid. Its subcellular location is the chloroplast. The enzyme catalyses [ThiS sulfur-carrier protein]-C-terminal-Gly-aminoethanethioate + 2-iminoacetate + 1-deoxy-D-xylulose 5-phosphate = [ThiS sulfur-carrier protein]-C-terminal Gly-Gly + 2-[(2R,5Z)-2-carboxy-4-methylthiazol-5(2H)-ylidene]ethyl phosphate + 2 H2O + H(+). It functions in the pathway cofactor biosynthesis; thiamine diphosphate biosynthesis. Catalyzes the rearrangement of 1-deoxy-D-xylulose 5-phosphate (DXP) to produce the thiazole phosphate moiety of thiamine. Sulfur is provided by the thiocarboxylate moiety of the carrier protein ThiS. In vitro, sulfur can be provided by H(2)S. The protein is Thiazole synthase of Phaeodactylum tricornutum (strain CCAP 1055/1).